The sequence spans 419 residues: Tyrosine--tRNA ligase 2 (419 aa).

Residue tyrosine 34 coordinates L-tyrosine. The 'HIGH' region signature appears at 39–48 (PTGDSMHIGH). Residues tyrosine 168 and glutamine 172 each coordinate L-tyrosine. The 'KMSKS' region motif lies at 230 to 234 (KFGKS). Residue lysine 233 participates in ATP binding. The S4 RNA-binding domain maps to 352 to 418 (KNIVEWLVDL…GKKNYSLVKL (67 aa)).

The protein belongs to the class-I aminoacyl-tRNA synthetase family. TyrS type 1 subfamily. In terms of assembly, homodimer.

It localises to the cytoplasm. It catalyses the reaction tRNA(Tyr) + L-tyrosine + ATP = L-tyrosyl-tRNA(Tyr) + AMP + diphosphate + H(+). Its function is as follows. Catalyzes the attachment of tyrosine to tRNA(Tyr) in a two-step reaction: tyrosine is first activated by ATP to form Tyr-AMP and then transferred to the acceptor end of tRNA(Tyr). This is Tyrosine--tRNA ligase 2 from Bacillus cereus (strain ZK / E33L).